The primary structure comprises 341 residues: tRNA N6-adenosine threonylcarbamoyltransferase (341 aa).

Residues His-115 and His-119 each contribute to the Fe cation site. Substrate contacts are provided by residues 137-141, Asp-170, Gly-183, Asp-187, and Asn-276; that span reads IVSGG. Position 304 (Asp-304) interacts with Fe cation.

The protein belongs to the KAE1 / TsaD family. Requires Fe(2+) as cofactor.

The protein resides in the cytoplasm. It carries out the reaction L-threonylcarbamoyladenylate + adenosine(37) in tRNA = N(6)-L-threonylcarbamoyladenosine(37) in tRNA + AMP + H(+). Its function is as follows. Required for the formation of a threonylcarbamoyl group on adenosine at position 37 (t(6)A37) in tRNAs that read codons beginning with adenine. Is involved in the transfer of the threonylcarbamoyl moiety of threonylcarbamoyl-AMP (TC-AMP) to the N6 group of A37, together with TsaE and TsaB. TsaD likely plays a direct catalytic role in this reaction. In Staphylococcus aureus (strain JH1), this protein is tRNA N6-adenosine threonylcarbamoyltransferase.